The primary structure comprises 209 residues: Potassium-transporting ATPase KdpC subunit (209 aa).

The helical transmembrane segment at 18-38 (MLAVFTLFGLGLAYSLVATGI) threads the bilayer.

Belongs to the KdpC family. The system is composed of three essential subunits: KdpA, KdpB and KdpC.

It is found in the cell inner membrane. In terms of biological role, part of the high-affinity ATP-driven potassium transport (or Kdp) system, which catalyzes the hydrolysis of ATP coupled with the electrogenic transport of potassium into the cytoplasm. This subunit acts as a catalytic chaperone that increases the ATP-binding affinity of the ATP-hydrolyzing subunit KdpB by the formation of a transient KdpB/KdpC/ATP ternary complex. The polypeptide is Potassium-transporting ATPase KdpC subunit (Xanthomonas oryzae pv. oryzae (strain MAFF 311018)).